A 201-amino-acid chain; its full sequence is Orotate phosphoribosyltransferase (201 aa).

A 5-phospho-alpha-D-ribose 1-diphosphate-binding site is contributed by 113-121 (EDIITTGKS). 2 residues coordinate orotate: threonine 117 and arginine 145.

The protein belongs to the purine/pyrimidine phosphoribosyltransferase family. PyrE subfamily. Homodimer. Mg(2+) is required as a cofactor.

The enzyme catalyses orotidine 5'-phosphate + diphosphate = orotate + 5-phospho-alpha-D-ribose 1-diphosphate. It participates in pyrimidine metabolism; UMP biosynthesis via de novo pathway; UMP from orotate: step 1/2. Functionally, catalyzes the transfer of a ribosyl phosphate group from 5-phosphoribose 1-diphosphate to orotate, leading to the formation of orotidine monophosphate (OMP). The protein is Orotate phosphoribosyltransferase of Helicobacter pylori (strain Shi470).